A 343-amino-acid chain; its full sequence is Holliday junction branch migration complex subunit RuvB (343 aa).

A large ATPase domain (RuvB-L) region spans residues 1 to 182 (MRDELLNTPT…FGISNRLDYY (182 aa)). ATP-binding positions include Ile-21, Arg-22, Gly-63, Lys-66, Thr-67, Thr-68, 129–131 (EDF), Arg-172, Tyr-182, and Arg-219. Thr-67 is a binding site for Mg(2+). The interval 183-253 (SAELLQRIII…LARKTLAALE (71 aa)) is small ATPAse domain (RuvB-S). The segment at 256–343 (EDGLDDMDKK…DGPLFQKGSS (88 aa)) is head domain (RuvB-H). The DNA site is built by Arg-311 and Arg-316.

This sequence belongs to the RuvB family. As to quaternary structure, homohexamer. Forms an RuvA(8)-RuvB(12)-Holliday junction (HJ) complex. HJ DNA is sandwiched between 2 RuvA tetramers; dsDNA enters through RuvA and exits via RuvB. An RuvB hexamer assembles on each DNA strand where it exits the tetramer. Each RuvB hexamer is contacted by two RuvA subunits (via domain III) on 2 adjacent RuvB subunits; this complex drives branch migration. In the full resolvosome a probable DNA-RuvA(4)-RuvB(12)-RuvC(2) complex forms which resolves the HJ.

Its subcellular location is the cytoplasm. It carries out the reaction ATP + H2O = ADP + phosphate + H(+). Its function is as follows. The RuvA-RuvB-RuvC complex processes Holliday junction (HJ) DNA during genetic recombination and DNA repair, while the RuvA-RuvB complex plays an important role in the rescue of blocked DNA replication forks via replication fork reversal (RFR). RuvA specifically binds to HJ cruciform DNA, conferring on it an open structure. The RuvB hexamer acts as an ATP-dependent pump, pulling dsDNA into and through the RuvAB complex. RuvB forms 2 homohexamers on either side of HJ DNA bound by 1 or 2 RuvA tetramers; 4 subunits per hexamer contact DNA at a time. Coordinated motions by a converter formed by DNA-disengaged RuvB subunits stimulates ATP hydrolysis and nucleotide exchange. Immobilization of the converter enables RuvB to convert the ATP-contained energy into a lever motion, pulling 2 nucleotides of DNA out of the RuvA tetramer per ATP hydrolyzed, thus driving DNA branch migration. The RuvB motors rotate together with the DNA substrate, which together with the progressing nucleotide cycle form the mechanistic basis for DNA recombination by continuous HJ branch migration. Branch migration allows RuvC to scan DNA until it finds its consensus sequence, where it cleaves and resolves cruciform DNA. This is Holliday junction branch migration complex subunit RuvB from Prosthecochloris aestuarii (strain DSM 271 / SK 413).